The chain runs to 261 residues: RING finger and CHY zinc finger domain-containing protein 1 (261 aa).

Residues 13–80 form a CHY-type zinc finger; the sequence is LAQGPRGCEH…AQQTCEDCST (68 aa). Residues C20, H22, C33, C34, C40, C43, H44, H50, C62, C65, C75, C78, C87, C90, H101, C102, C105, C108, H118, C119, C122, C125, H134, and C136 each contribute to the Zn(2+) site. The CTCHY-type zinc-finger motif lies at 82–144; sequence FGEYYCSICH…KCIENVSRQN (63 aa). The segment at 145–189 adopts an RING-type zinc-finger fold; the sequence is CPICLEDIHTSRVVAHVLPCGHLLHRTCYEEMLKEGYRCPLCMHS.

As to quaternary structure, monomer and homodimer. Interacts with AR, MDM2, KAT5, PLAG1, PLAGL2, COPE, UBE2D2 and GORAB/NTKLBP1. Subject to ubiquitination and proteasomal degradation. Interaction with PLAGL2 or KAT5 enhances protein stability. In terms of tissue distribution, detected in testis, liver, kidney and heart.

The protein resides in the nucleus. It localises to the nucleus speckle. It is found in the cytoplasm. It carries out the reaction S-ubiquitinyl-[E2 ubiquitin-conjugating enzyme]-L-cysteine + [acceptor protein]-L-lysine = [E2 ubiquitin-conjugating enzyme]-L-cysteine + N(6)-ubiquitinyl-[acceptor protein]-L-lysine.. It functions in the pathway protein modification; protein ubiquitination. E3 ubiquitin-protein ligase that mediates ubiquitination of target proteins, including p53/TP53, TP73, HDAC1 and CDKN1B. Mediates ubiquitination and degradation of p53/TP53; preferentially acts on tetrameric p53/TP53. Catalyzes monoubiquitinates the translesion DNA polymerase POLH. Involved in the ribosome-associated quality control (RQC) pathway, which mediates the extraction of incompletely synthesized nascent chains from stalled ribosomes: RCHY1 acts downstream of NEMF and recognizes CAT tails associated with stalled nascent chains, leading to their ubiquitination and degradation. In Mus musculus (Mouse), this protein is RING finger and CHY zinc finger domain-containing protein 1 (Rchy1).